The sequence spans 147 residues: Heavy metal-dependent transcription regulator 1 (147 aa).

The HTH merR-type domain occupies 1 to 70 (MNIGQASKVV…VEQIKDLLAL (70 aa)). The H-T-H motif DNA-binding region spans 3 to 22 (IGQASKVVSGVSSKMIRYYE).

The protein localises to the cytoplasm. Functionally, transcriptional regulator involved in acid tolerance. Binds copper. The protein is Heavy metal-dependent transcription regulator 1 (hmrR1) of Rhizobium meliloti (strain 1021) (Ensifer meliloti).